We begin with the raw amino-acid sequence, 426 residues long: MLDSKLVRTQLQDVAARLATRGYQLDVARIEALEAQRKTVQTRTEQLQAERNARSKSIGQAKQRGEDIAPLLADVDRMGSELESGKQELDRIQSELDQLMLSIPNLPHDSVPVGADEEENVEVRRWGTPKAFDFPVQDHVALGEQHGWLDFETAAKLSGARFALMRGPIARLHRALAQFMIDLHTREHGYEEAYTPYLVQAPALQGTGQLPKFEDDLFKISREGEADFYLIPTAEVSLTNIVAGEILDAKQLPLKFVAHTPCFRSEAGASGRDTRGMIRQHQFDKVEMVQIVEPSKSFEALEELTGNAEKVLQLLELPYRVLSLCTGDMGFGATKTYDLEVWVPSQDKYREISSCSNCGDFQARRMQARYRNPETGKPELVHTLNGSGLAVGRTLVAVLENYQQADGRILVPEVLKPYMGGIEVIG.

233–235 (TAE) is a binding site for L-serine. ATP is bound at residue 264–266 (RSE). E287 lines the L-serine pocket. 351-354 (EISS) is a binding site for ATP. S387 is an L-serine binding site.

This sequence belongs to the class-II aminoacyl-tRNA synthetase family. Type-1 seryl-tRNA synthetase subfamily. As to quaternary structure, homodimer. The tRNA molecule binds across the dimer.

It is found in the cytoplasm. The catalysed reaction is tRNA(Ser) + L-serine + ATP = L-seryl-tRNA(Ser) + AMP + diphosphate + H(+). It catalyses the reaction tRNA(Sec) + L-serine + ATP = L-seryl-tRNA(Sec) + AMP + diphosphate + H(+). Its pathway is aminoacyl-tRNA biosynthesis; selenocysteinyl-tRNA(Sec) biosynthesis; L-seryl-tRNA(Sec) from L-serine and tRNA(Sec): step 1/1. In terms of biological role, catalyzes the attachment of serine to tRNA(Ser). Is also able to aminoacylate tRNA(Sec) with serine, to form the misacylated tRNA L-seryl-tRNA(Sec), which will be further converted into selenocysteinyl-tRNA(Sec). The sequence is that of Serine--tRNA ligase from Stutzerimonas stutzeri (strain A1501) (Pseudomonas stutzeri).